The primary structure comprises 254 residues: rRNA N-glycosylase sapovaccarin-S1 (254 aa).

It belongs to the ribosome-inactivating protein family. Type 1 RIP subfamily. Expressed in seeds; most abundant in the perisperm.

The enzyme catalyses Endohydrolysis of the N-glycosidic bond at one specific adenosine on the 28S rRNA.. Functionally, exhibits N-glycosylase activity. Catalyzes the release of one adenine from a ribosome. Acts as a ribosome-inactivating protein and inhibits protein synthesis in a rabbit-reticulocyte lysate system and in various cell lines (in vitro). Induces cell death in Huh-7 liver cells. May contribute to the protection against plant pests and predators or play a role in regulating the death of plant cells. This Gypsophila vaccaria (Cow soapwort) protein is rRNA N-glycosylase sapovaccarin-S1.